We begin with the raw amino-acid sequence, 538 residues long: Mitochondria-eating protein (538 aa).

The segment at 1–273 (MAENLKRLVS…PRSRSCSRSR (273 aa)) is interaction with YWHAG/14-3-3 protein gamma. Ser-85 carries the phosphoserine modification. A disordered region spans residues 97-137 (SKVPSLQDTFDRERHKDPSPRDRDMQQLDSNLNSTRSQCNQ). The span at 105 to 122 (TFDRERHKDPSPRDRDMQ) shows a compositional bias: basic and acidic residues. Coiled coils occupy residues 118-187 (DRDM…RHRN) and 219-256 (DQQD…RSSR). A compositionally biased stretch (polar residues) spans 123–137 (QLDSNLNSTRSQCNQ). Phosphoserine is present on residues Ser-156 and Ser-159. Disordered stretches follow at residues 173–226 (QLKS…TEAM) and 247–294 (KSAL…SKLS). The span at 181 to 210 (EDARHRNTDQRSSENRRSEPWSLEERKREQ) shows a compositional bias: basic and acidic residues. The segment covering 211–224 (WNSLKQNADQQDTE) has biased composition (polar residues). The segment covering 253–278 (RSSRSRSPSPAPRSRSCSRSRSASPS) has biased composition (low complexity). Ser-287 and Ser-509 each carry phosphoserine.

The protein belongs to the MIEAP family. As to quaternary structure, interacts (via coiled-coil domains) with BNIP3L (via BH3 domain). Interacts (via coiled-coil domains) with BNIP3 (via BH3 domain). Interacts with YWHAG/14-3-3 protein gamma; a protein that also plays a role in MALM.

It is found in the cytoplasm. Its subcellular location is the cytosol. The protein resides in the mitochondrion outer membrane. The protein localises to the mitochondrion matrix. Key regulator of mitochondrial quality that mediates the repairing or degradation of unhealthy mitochondria in response to mitochondrial damage. Mediator of mitochondrial protein catabolic process (also named MALM) by mediating the degradation of damaged proteins inside mitochondria by promoting the accumulation in the mitochondrial matrix of hydrolases that are characteristic of the lysosomal lumen. Also involved in mitochondrion degradation of damaged mitochondria by promoting the formation of vacuole-like structures (named MIV), which engulf and degrade unhealthy mitochondria by accumulating lysosomes. The physical interaction of SPATA18/MIEAP, BNIP3 and BNIP3L/NIX at the mitochondrial outer membrane regulates the opening of a pore in the mitochondrial double membrane in order to mediate the translocation of lysosomal proteins from the cytoplasm to the mitochondrial matrix. Binds cardiolipin. May form molecular condensates (non-membrane-bounded organelles) within mitochondria that compartmentalize and promote cardiolipin metabolism. In Homo sapiens (Human), this protein is Mitochondria-eating protein (SPATA18).